Reading from the N-terminus, the 63-residue chain is Large ribosomal subunit protein bL28 (63 aa).

Belongs to the bacterial ribosomal protein bL28 family.

The protein is Large ribosomal subunit protein bL28 of Coprothermobacter proteolyticus (strain ATCC 35245 / DSM 5265 / OCM 4 / BT).